Consider the following 287-residue polypeptide: ATP synthase gamma chain (287 aa).

This sequence belongs to the ATPase gamma chain family. F-type ATPases have 2 components, CF(1) - the catalytic core - and CF(0) - the membrane proton channel. CF(1) has five subunits: alpha(3), beta(3), gamma(1), delta(1), epsilon(1). CF(0) has three main subunits: a, b and c.

It localises to the cell inner membrane. Its function is as follows. Produces ATP from ADP in the presence of a proton gradient across the membrane. The gamma chain is believed to be important in regulating ATPase activity and the flow of protons through the CF(0) complex. The chain is ATP synthase gamma chain from Xylella fastidiosa (strain 9a5c).